A 300-amino-acid polypeptide reads, in one-letter code: Fatty acid elongase 3 (300 aa).

Helical transmembrane passes span 31 to 51, 61 to 81, and 127 to 147; these read VPAV…ENVM, FLNM…AYYC, and IFFD…KIPE. Residues 165–169 carry the HxxHH motif motif; the sequence is HWYHH. Catalysis depends on H168, which acts as the Nucleophile. The next 4 membrane-spanning stretches (helical) occupy residues 170 to 190, 192 to 212, 219 to 239, and 261 to 283; these read ATVM…GLWF, TMNY…ACGM, IAPL…LIVL, and MGLL…SYIS.

It belongs to the ELO family.

It is found in the endoplasmic reticulum membrane. It carries out the reaction an acyl-CoA + malonyl-CoA + H(+) = a 3-oxoacyl-CoA + CO2 + CoA. The protein operates within lipid metabolism; fatty acid biosynthesis. In terms of biological role, involved in the synthesis of fatty acids. Elongates C14 fatty acids to C18. Required for the maintenance of the global lipidome profile in this parasite. The sequence is that of Fatty acid elongase 3 from Trypanosoma cruzi (strain CL Brener).